The chain runs to 59 residues: Protein B3 (59 aa).

The sequence is that of Protein B3 (B3) from Homo sapiens (Human).